A 206-amino-acid chain; its full sequence is MAVVKVYDQNKKEAGELTLAPEVFEVEVKPEILNLVVRAHRAGLRSGTHATKTRAFVSGGGAKPWRQKGTGRARSGSNRSPIWRGGAVIFGPQPREYGFKVNKKVRQLALKMALSSRLAGENLMVVKGIELPEIKTKLFAKVAGALGLEKALVITAEADTTLALSARNIPGITLITADQLSVYEILKHPKLVMFEGAVESVQARLK.

Residues Ala-55–Ser-80 are disordered.

The protein belongs to the universal ribosomal protein uL4 family. Part of the 50S ribosomal subunit.

Its function is as follows. One of the primary rRNA binding proteins, this protein initially binds near the 5'-end of the 23S rRNA. It is important during the early stages of 50S assembly. It makes multiple contacts with different domains of the 23S rRNA in the assembled 50S subunit and ribosome. Forms part of the polypeptide exit tunnel. The protein is Large ribosomal subunit protein uL4 of Nitratidesulfovibrio vulgaris (strain DSM 19637 / Miyazaki F) (Desulfovibrio vulgaris).